The sequence spans 322 residues: Crystallin J1B (322 aa).

It belongs to the ADP-ribosylglycohydrolase family. J1 crystallin subfamily. Expressed in the rhopalia. Present in both the large and small eyes.

The sequence is that of Crystallin J1B from Tripedalia cystophora (Jellyfish).